Here is a 429-residue protein sequence, read N- to C-terminus: MDLVPSSTLWSIAQELALYLAFTVPTAFVIITTPKSSFLRLAWTPCLLYILYRFSLQVPSLTTSQFLNGVAAGQATVAALQCLNLLLITKLDERELVHAGLCIPSSSLLVRVACAWALLVNFRGIGTVWEVKNVPQHAAYLQKPKQHRLSRRRYVLRESAIIIWQYLLLDLIHMSTKDTPPGDLARLFGPGLEYRYLDATAEQWFGRVSVGIFSWLVPSRVCLNIVSRIYCLVLVVLRISAPESCRPSFGRVRDACTIRGFWGKFWHQSFRWPLTSVGSFVARDVLRLPRPSLLERYTNIFFTFFTSAVLHLACDAILGIPPSGSGAMPFFCVVPLAIMFEDGVQEVWRRVTGPSQGAVPFWQRLVGFLWVGSWMYATSPWYLYPAARQPPERTWMVPVSVVGEIGLRVAQKVLLVYGVVLYWAIGGEI.

Helical transmembrane passes span 12–32 (IAQE…VIIT), 39–56 (LRLA…RFSL), 69–89 (GVAA…LLIT), 154–174 (YVLR…LIHM), 221–241 (VCLN…RISA), 300–320 (IFFT…ILGI), 324–344 (GSGA…EDGV), 365–385 (LVGF…YLYP), and 409–429 (VAQK…GGEI).

This sequence belongs to the wax synthase family.

The protein localises to the membrane. It functions in the pathway secondary metabolite biosynthesis; terpenoid biosynthesis. Its function is as follows. Acetyltransferase; part of the gene cluster that mediates the biosynthesis of pyripyropene A, a specific human acyl-coenzyme A:cholesterol acyltransferase 2 inhibitor. The first step of the pathway is the synthesis of nicotinyl-CoA from nicotinic acid by the nicotinic acid-CoA ligase pyr1. Nicotinyl-CoA is then a substrate of polyketide synthase pyr2 to produce 4-hydroxy-6-(3-pyridinyl)-2H-pyran-2-one (HPPO) which is further prenylated by the polyprenyl transferase pyr6 to yield farnesyl-HPPO. The next steps consist of an epoxidation of farnesyl-HPPO to epoxyfarnesyl-HPPO by FAD-dependent monooxygenase pyr5 and a cyclization of the terpenoid portion by the terpene cyclase pyr4 to yield deacetyl-pyripyropene E. The 2 cytochrome P450 monooxygenases pyr3 and pyr9, and the 2 acetyltransferases pyr7 and pyr8 are involved in the conversion of deacetyl-pyripyropene E into pyripyropene A through several cycles of oxidation and acetylation steps. Pyr7 acetylates deacetyl-pyripyropene E to pyripyropene E which is oxidized to 11-deacetyl-pyripyropene O by pyr3, which is in turn acetylated into pyripyropene O by pyr8. Pyripyropene O is then oxidized to deacetyl-pyripyropene A by pyr9. Deacetyl-pyripyropene A is finally acetylated to pyripyropene A by pyr8. This is Acetyltransferase pyr8 from Aspergillus fumigatus (strain ATCC MYA-4609 / CBS 101355 / FGSC A1100 / Af293) (Neosartorya fumigata).